Reading from the N-terminus, the 52-residue chain is Keratin-associated protein 19-2 (52 aa).

This sequence belongs to the KRTAP type 19 family. Interacts with hair keratins.

In terms of biological role, in the hair cortex, hair keratin intermediate filaments are embedded in an interfilamentous matrix, consisting of hair keratin-associated proteins (KRTAP), which are essential for the formation of a rigid and resistant hair shaft through their extensive disulfide bond cross-linking with abundant cysteine residues of hair keratins. The matrix proteins include the high-sulfur and high-glycine-tyrosine keratins. The chain is Keratin-associated protein 19-2 (KRTAP19-2) from Homo sapiens (Human).